The following is a 153-amino-acid chain: ORM1-like protein 3 (153 aa).

The tract at residues 1–17 (MNVGTAHSEVNPNTRVM) is important for ceramide level-sensing. The Cytoplasmic portion of the chain corresponds to 1–21 (MNVGTAHSEVNPNTRVMNSRG). A run of 2 helical transmembrane segments spans residues 22–42 (IWLSYVLAIGLLHVVLLSIPF) and 43–63 (VSVPVVWTLTNLIHNMGMYIF). Over 64–94 (LHTVKGTPFETPDQGKARLLTHWEQMDYGVQ) the chain is Cytoplasmic. The helical transmembrane segment at 95-117 (FTASRKFLTITPIVLYFLTSFYT) threads the bilayer. Topologically, residues 118 to 121 (KYDQ) are extracellular. The chain crosses the membrane as a helical span at residues 122 to 142 (IHFILNTVSLMSVLIPKLPQL). Pro137 carries the post-translational modification Hydroxyproline. Residues 143-153 (HGVRIFGINKY) are Cytoplasmic-facing.

This sequence belongs to the ORM family. Ceramide-sensitive subunit of the serine palmitoyltransferase (SPT) complex, which is also composed of SPTLC1, SPTLC2/3 and SPTSSA/B. Post-translationally, when hydroxylated at Pro-137, ubiquitinated via 'Lys-48'-linkage, leading to proteasomal degradation. In endothelial cells, ORMDL3 proteasomal degradation is controlled by the sphingosine 1-phosphate receptor signaling pathway.

It localises to the endoplasmic reticulum membrane. Its function is as follows. Plays an essential role in the homeostatic regulation of sphingolipid de novo biosynthesis by modulating the activity of the serine palmitoyltransferase (SPT) in response to ceramide levels. When complexed to SPT, the binding of ceramides to its N-terminus stabilizes a conformation that block SPT substrate entry, hence preventing SPT catalytic activity. Through this mechanism, maintains ceramide levels at sufficient concentrations for the production of complex sphingolipids, but which prevents the accumulation of ceramides to levels that trigger apoptosis. The polypeptide is ORM1-like protein 3 (ORMDL3) (Bos taurus (Bovine)).